Consider the following 190-residue polypeptide: Large ribosomal subunit protein bL25 (190 aa).

It belongs to the bacterial ribosomal protein bL25 family. CTC subfamily. Part of the 50S ribosomal subunit; part of the 5S rRNA/L5/L18/L25 subcomplex. Contacts the 5S rRNA. Binds to the 5S rRNA independently of L5 and L18.

Functionally, this is one of the proteins that binds to the 5S RNA in the ribosome where it forms part of the central protuberance. The polypeptide is Large ribosomal subunit protein bL25 (Neisseria meningitidis serogroup C (strain 053442)).